Reading from the N-terminus, the 261-residue chain is MLTIADRSFQSHLIMGTGGASSFDTLEKSLIASGTELTTVAMRRHAAHTGAHGESVFELMQRLNITPLPNTAGCRTARDAILTAQLAREALDTSWIKVEVIADDTTLLPDVLELIDATETLTNDGFTVLAYTSDDPVVAQRLEDAGAAAVMPLGSPIGTGLGILNPHNIELICSRATVPVLLDAGIGTASDATLAMELGCSGVLLASAINRCINPITMATAMKHAVEAGRLAREAGRIPRREHAVASSSFEGLASWADEVL.

Lys-97 serves as the catalytic Schiff-base intermediate with DXP. 1-deoxy-D-xylulose 5-phosphate-binding positions include Gly-158, 184–185 (AG), and 206–207 (AS).

The protein belongs to the ThiG family. Homotetramer. Forms heterodimers with either ThiH or ThiS.

The protein resides in the cytoplasm. The enzyme catalyses [ThiS sulfur-carrier protein]-C-terminal-Gly-aminoethanethioate + 2-iminoacetate + 1-deoxy-D-xylulose 5-phosphate = [ThiS sulfur-carrier protein]-C-terminal Gly-Gly + 2-[(2R,5Z)-2-carboxy-4-methylthiazol-5(2H)-ylidene]ethyl phosphate + 2 H2O + H(+). Its pathway is cofactor biosynthesis; thiamine diphosphate biosynthesis. In terms of biological role, catalyzes the rearrangement of 1-deoxy-D-xylulose 5-phosphate (DXP) to produce the thiazole phosphate moiety of thiamine. Sulfur is provided by the thiocarboxylate moiety of the carrier protein ThiS. In vitro, sulfur can be provided by H(2)S. The polypeptide is Thiazole synthase (Corynebacterium diphtheriae (strain ATCC 700971 / NCTC 13129 / Biotype gravis)).